The sequence spans 111 residues: uncharacterized protein (111 aa).

It belongs to the UPF0440 family.

This is an uncharacterized protein from Pyrococcus furiosus (strain ATCC 43587 / DSM 3638 / JCM 8422 / Vc1).